Reading from the N-terminus, the 215-residue chain is MTSAIEEEREILESIYPEEFKCINDSTFEITQPIDREESNCDNPPSLIFTCQLSEAYPDEVPDVKITFSEPHPWLGEEEIERLKQVVAQNAEECLGMAMIFSLCSVAKEETNAILIEQSQRETQAIEERHRKEAEQENKKFHGTPVTVESFTEWKKGFDAWRNEQLKLEQESKLKEALSAASSSNARKAILEKRMTGRELFENNLVKLDDVEGEA.

Residues 7–114 form the RWD domain; that stretch reads EEREILESIY…SVAKEETNAI (108 aa).

Its subcellular location is the cytoplasm. It is found in the nucleus. The chain is RWD domain-containing protein C1393.09c from Schizosaccharomyces pombe (strain 972 / ATCC 24843) (Fission yeast).